Here is a 474-residue protein sequence, read N- to C-terminus: Protein CyaE (474 aa).

Residues 1–31 (MAAVQVRRRGRALALALWAGFALSVGGGVRA) form the signal peptide.

This sequence belongs to the outer membrane factor (OMF) (TC 1.B.17) family.

It is found in the cell outer membrane. Its function is as follows. CyaE is necessary for transport of calmodulin-sensitive adenylate cyclase-hemolysin (cyclolysin). This Bordetella pertussis (strain Tohama I / ATCC BAA-589 / NCTC 13251) protein is Protein CyaE (cyaE).